We begin with the raw amino-acid sequence, 71 residues long: Large ribosomal subunit protein uL29 (71 aa).

It belongs to the universal ribosomal protein uL29 family.

The chain is Large ribosomal subunit protein uL29 from Roseiflexus sp. (strain RS-1).